An 87-amino-acid chain; its full sequence is HssA/B-like protein 54 (87 aa).

This sequence belongs to the hssA/B family.

This is HssA/B-like protein 54 (hssl54) from Dictyostelium discoideum (Social amoeba).